The chain runs to 538 residues: Chaperonin GroEL 1 (538 aa).

Residues 29–32, 86–90, Gly-413, and Asp-494 each bind ATP; these read TLGP and DGTTT.

This sequence belongs to the chaperonin (HSP60) family. In terms of assembly, forms a cylinder of 14 subunits composed of two heptameric rings stacked back-to-back. Interacts with the co-chaperonin GroES.

The protein localises to the cytoplasm. It carries out the reaction ATP + H2O + a folded polypeptide = ADP + phosphate + an unfolded polypeptide.. Functionally, together with its co-chaperonin GroES, plays an essential role in assisting protein folding. The GroEL-GroES system forms a nano-cage that allows encapsulation of the non-native substrate proteins and provides a physical environment optimized to promote and accelerate protein folding. This Mycolicibacterium paratuberculosis (strain ATCC BAA-968 / K-10) (Mycobacterium paratuberculosis) protein is Chaperonin GroEL 1.